The sequence spans 740 residues: Ion-translocating oxidoreductase complex subunit C (740 aa).

2 4Fe-4S ferredoxin-type domains span residues 369-397 and 407-436; these read GEPQ…QQLY and KATT…VQYF. [4Fe-4S] cluster-binding residues include Cys-377, Cys-380, Cys-383, Cys-387, Cys-416, Cys-419, Cys-422, and Cys-426. The interval 602–714 is disordered; it reads KLEQQQANAE…NAEPEEQIDP (113 aa). The span at 605–615 shows a compositional bias: low complexity; it reads QQQANAEPEQQ.

It belongs to the 4Fe4S bacterial-type ferredoxin family. RnfC subfamily. The complex is composed of six subunits: RsxA, RsxB, RsxC, RsxD, RsxE and RsxG. [4Fe-4S] cluster is required as a cofactor.

The protein localises to the cell inner membrane. In terms of biological role, part of a membrane-bound complex that couples electron transfer with translocation of ions across the membrane. Required to maintain the reduced state of SoxR. This is Ion-translocating oxidoreductase complex subunit C from Escherichia coli O17:K52:H18 (strain UMN026 / ExPEC).